The following is a 107-amino-acid chain: MQFSTTPTLEGQSIVEYCGVVTGEAILGANIFRDFFAGIRDIVGGRSGAYEKELRKAREIAFQELGEQAKALGADAVVGIDIDYETVGKDGSMLMVSVSGTAVKTRR.

Belongs to the UPF0145 family.

In Salmonella gallinarum (strain 287/91 / NCTC 13346), this protein is UPF0145 protein YbjQ.